The sequence spans 711 residues: MKLKLNVLTIILLPVHLLITIYSALIFIPWYFLTNAKKKNAMAKRIKAKPTSDKPGSPYRSVTHFDSLAVIDIPGADTLDKLFDHAVSKFGKKDSLGTREILSEENEMQPNGKVFKKLILGNYKWMNYLEVNRRVNNFGSGLTALGLKPKNTIAIFCETRAEWMIAAQTCFKYNFPLVTLYATLGKEAVVHGLNESEASYLITSVELLESKLKTALLDISCVKHIIYVDNKAINKAEYPEGFEIHSMQSVEELGSNPENLGIPPSRPTPSDMAIVMYTSGSTGRPKGVMMHHSNLIAGMTGQCERIPGLGPKDTYIGYLPLAHVLELTAEISCFTYGCRIGYSSPLTLSDQSSKIKKGSKGDCTVLKPTLMAAVPEIMDRIYKNVMSKVQEMNYIQKTLFKIGYDYKLEQIKKGYDAPLCNLLLFKKVKALLGGNVRMMLSGGAPLSPQTHRFMNVCFCCPIGQGYGLTESCGAGTVTEVTDYTTGRVGAPLICCEIKLKDWQEGGYTINDKPNPRGEIVIGGQNISMGYFKNEEKTAEDYSVDENGQRWFCTGDIGEFHPDGCLQIIDRKKDLVKLQAGEYVSLGKVEAALKNCPLIDNICAFAKSDQSYVISFVVPNQKRLTLLAQQKGVEGTWVDICNNPAMEAEILKEIREAANAMKLERFEIPIKVRLSPEPWTPETGLVTDAFKLKRKELRNHYLKDIERMYGGK.

Residues 8–28 traverse the membrane as a helical; Signal-anchor for type III membrane protein segment; it reads LTIILLPVHLLITIYSALIFI. The Cytoplasmic segment spans residues 29–711; sequence PWYFLTNAKK…KDIERMYGGK (683 aa). A Phosphoserine modification is found at S447.

This sequence belongs to the ATP-dependent AMP-binding enzyme family. Requires Mg(2+) as cofactor.

It is found in the mitochondrion outer membrane. It localises to the peroxisome membrane. The protein localises to the microsome membrane. The protein resides in the endoplasmic reticulum membrane. Its subcellular location is the cell membrane. The enzyme catalyses a long-chain fatty acid + ATP + CoA = a long-chain fatty acyl-CoA + AMP + diphosphate. It catalyses the reaction (5Z,8Z,11Z,14Z)-eicosatetraenoate + ATP + CoA = (5Z,8Z,11Z,14Z)-eicosatetraenoyl-CoA + AMP + diphosphate. It carries out the reaction hexadecanoate + ATP + CoA = hexadecanoyl-CoA + AMP + diphosphate. The catalysed reaction is (E)-hexadec-2-enoate + ATP + CoA = (2E)-hexadecenoyl-CoA + AMP + diphosphate. The enzyme catalyses 15-hydroxy-(5Z,8Z,11Z,13E)-eicosatetraenoate + ATP + CoA = 15-hydroxy-(5Z,8Z,11Z,13E)-eicosatetraenoyl-CoA + AMP + diphosphate. It catalyses the reaction 12-hydroxy-(5Z,8Z,10E,14Z)-eicosatetraenoate + ATP + CoA = 12-hydroxy-(5Z,8Z,10E,14Z)-eicosatetraenoyl-CoA + AMP + diphosphate. It carries out the reaction 5-hydroxy-(6E,8Z,11Z,14Z)-eicosatetraenoate + ATP + CoA = 5-hydroxy-(6E,8Z,11Z,14Z)-eicosatetraenoyl-CoA + AMP + diphosphate. The catalysed reaction is 5,6-epoxy-(8Z,11Z,14Z)-eicosatrienoate + ATP + CoA = 5,6-epoxy-(8Z,11Z,14Z)-eicosatrienoyl-CoA + AMP + diphosphate. The enzyme catalyses 14,15-epoxy-(5Z,8Z,11Z)-eicosatrienoate + ATP + CoA = 14,15-epoxy-(5Z,8Z,11Z)-eicosatrienoyl-CoA + AMP + diphosphate. It catalyses the reaction 11,12-epoxy-(5Z,8Z,14Z)-eicosatrienoate + ATP + CoA = 11,12-epoxy-(5Z,8Z,14Z)-eicosatrienoyl-CoA + AMP + diphosphate. It carries out the reaction 8,9-epoxy-(5Z,11Z,14Z)-eicosatrienoate + ATP + CoA = 8,9-epoxy-(5Z,11Z,14Z)-eicosatrienoyl-CoA + AMP + diphosphate. Both triacsin C and rosiglitazone inhibit arachidonoyl-CoA ligase activity. Catalyzes the conversion of long-chain fatty acids to their active form acyl-CoA for both synthesis of cellular lipids, and degradation via beta-oxidation. Preferentially activates arachidonate and eicosapentaenoate as substrates. Preferentially activates 8,9-EET &gt; 14,15-EET &gt; 5,6-EET &gt; 11,12-EET. Modulates glucose-stimulated insulin secretion by regulating the levels of unesterified EETs. Modulates prostaglandin E2 secretion. The chain is Long-chain-fatty-acid--CoA ligase 4 (ACSL4) from Homo sapiens (Human).